Reading from the N-terminus, the 182-residue chain is Large ribosomal subunit protein uL5 (182 aa).

The protein belongs to the universal ribosomal protein uL5 family. In terms of assembly, part of the 50S ribosomal subunit; part of the 5S rRNA/L5/L18/L25 subcomplex. Contacts the 5S rRNA and the P site tRNA. Forms a bridge to the 30S subunit in the 70S ribosome.

Functionally, this is one of the proteins that bind and probably mediate the attachment of the 5S RNA into the large ribosomal subunit, where it forms part of the central protuberance. In the 70S ribosome it contacts protein S13 of the 30S subunit (bridge B1b), connecting the 2 subunits; this bridge is implicated in subunit movement. Contacts the P site tRNA; the 5S rRNA and some of its associated proteins might help stabilize positioning of ribosome-bound tRNAs. The protein is Large ribosomal subunit protein uL5 of Borreliella burgdorferi (strain ATCC 35210 / DSM 4680 / CIP 102532 / B31) (Borrelia burgdorferi).